Consider the following 90-residue polypeptide: Progonadoliberin-3 (90 aa).

Residues 1-23 form the signal peptide; it reads MEAGSRVIMQVLLLALVVQVTLS. Gln24 bears the Pyrrolidone carboxylic acid mark. Glycine amide is present on Gly33.

It belongs to the GnRH family. As to expression, expressed only in the terminal nerve nucleus of the telencephalon.

It localises to the secreted. Its function is as follows. Stimulates the secretion of gonadotropins. In Haplochromis burtoni (Burton's mouthbrooder), this protein is Progonadoliberin-3 (gnrh3).